The following is a 426-amino-acid chain: Enolase (426 aa).

A (2R)-2-phosphoglycerate-binding site is contributed by glutamine 165. Glutamate 209 (proton donor) is an active-site residue. The Mg(2+) site is built by aspartate 244, glutamate 287, and aspartate 313. Residues lysine 338, arginine 367, serine 368, and lysine 389 each coordinate (2R)-2-phosphoglycerate. The Proton acceptor role is filled by lysine 338.

The protein belongs to the enolase family. It depends on Mg(2+) as a cofactor.

Its subcellular location is the cytoplasm. The protein localises to the secreted. It is found in the cell surface. It catalyses the reaction (2R)-2-phosphoglycerate = phosphoenolpyruvate + H2O. It participates in carbohydrate degradation; glycolysis; pyruvate from D-glyceraldehyde 3-phosphate: step 4/5. Functionally, catalyzes the reversible conversion of 2-phosphoglycerate (2-PG) into phosphoenolpyruvate (PEP). It is essential for the degradation of carbohydrates via glycolysis. This is Enolase from Methanococcus maripaludis (strain C7 / ATCC BAA-1331).